A 154-amino-acid polypeptide reads, in one-letter code: Lipoprotein signal peptidase (154 aa).

2 helical membrane passes run 52 to 72 (ILAG…IGIV) and 85 to 105 (LGVA…DRAV). Residues aspartate 111 and aspartate 129 contribute to the active site. Residues 124–144 (IFNIADSSLCVGVMLLFIQML) traverse the membrane as a helical segment.

It belongs to the peptidase A8 family.

It localises to the cell membrane. It carries out the reaction Release of signal peptides from bacterial membrane prolipoproteins. Hydrolyzes -Xaa-Yaa-Zaa-|-(S,diacylglyceryl)Cys-, in which Xaa is hydrophobic (preferably Leu), and Yaa (Ala or Ser) and Zaa (Gly or Ala) have small, neutral side chains.. Its pathway is protein modification; lipoprotein biosynthesis (signal peptide cleavage). Its function is as follows. This protein specifically catalyzes the removal of signal peptides from prolipoproteins. The sequence is that of Lipoprotein signal peptidase from Bacillus subtilis (strain 168).